The sequence spans 1442 residues: Sulfite reductase [NADPH] subunit beta (1442 aa).

In terms of domain architecture, Flavodoxin-like spans 682 to 831 (LHVYYASDGG…AYSEWEPKLW (150 aa)). Ser-903 carries the post-translational modification Phosphoserine. [4Fe-4S] cluster-binding residues include Cys-1300, Cys-1306, Cys-1345, and Cys-1349. Residue Cys-1349 coordinates siroheme.

Belongs to the nitrite and sulfite reductase 4Fe-4S domain family. In terms of assembly, alpha(2)-beta(2). The alpha component is a flavoprotein, the beta component is a hemoprotein. Requires siroheme as cofactor. [4Fe-4S] cluster serves as cofactor.

It localises to the cytoplasm. The enzyme catalyses hydrogen sulfide + 3 NADP(+) + 3 H2O = sulfite + 3 NADPH + 4 H(+). It participates in sulfur metabolism; hydrogen sulfide biosynthesis; hydrogen sulfide from sulfite (NADPH route): step 1/1. Its function is as follows. Catalyzes the reduction of sulfite to sulfide, one of several activities required for the biosynthesis of L-cysteine from sulfate. This Saccharomyces cerevisiae (strain ATCC 204508 / S288c) (Baker's yeast) protein is Sulfite reductase [NADPH] subunit beta (MET5).